The following is a 254-amino-acid chain: Gamma-glutamyl-gamma-aminobutyrate hydrolase PuuD (254 aa).

One can recognise a Glutamine amidotransferase type-1 domain in the interval 16-250 (RNRLKGHATQ…ITACQHHIAE (235 aa)). The Nucleophile role is filled by cysteine 114. Residues histidine 222 and glutamate 224 contribute to the active site.

The protein belongs to the peptidase C26 family. In terms of assembly, homodimer.

It carries out the reaction 4-(gamma-L-glutamylamino)butanoate + H2O = 4-aminobutanoate + L-glutamate. The protein operates within amine and polyamine degradation; putrescine degradation; 4-aminobutanoate from putrescine: step 4/4. Involved in the breakdown of putrescine via hydrolysis of the gamma-glutamyl linkage of gamma-glutamyl-gamma-aminobutyrate. The polypeptide is Gamma-glutamyl-gamma-aminobutyrate hydrolase PuuD (puuD) (Escherichia coli (strain K12)).